The chain runs to 406 residues: Large ribosomal subunit protein uL4z (406 aa).

The disordered stretch occupies residues 56–95 (PYAVSKKAGHQTSAESWGTGRAVSRIPRVPGGGTHRAGQA).

Belongs to the universal ribosomal protein uL4 family.

The protein is Large ribosomal subunit protein uL4z (RPL4A) of Arabidopsis thaliana (Mouse-ear cress).